Reading from the N-terminus, the 750-residue chain is Glycerophosphodiester phosphodiesterase GDPDL7 (750 aa).

The N-terminal stretch at 1 to 17 (MLRFIIFFSLFIHLCVA) is a signal peptide. GP-PDE domains follow at residues 41 to 339 (PAVV…SQSI) and 355 to 654 (ALVI…TRYL). 4 N-linked (GlcNAc...) asparagine glycosylation sites follow: Asn134, Asn304, Asn603, and Asn716.

The protein belongs to the glycerophosphoryl diester phosphodiesterase family. In terms of tissue distribution, expressed in flowers and siliques.

The catalysed reaction is a sn-glycero-3-phosphodiester + H2O = an alcohol + sn-glycerol 3-phosphate + H(+). The sequence is that of Glycerophosphodiester phosphodiesterase GDPDL7 from Arabidopsis thaliana (Mouse-ear cress).